The primary structure comprises 345 residues: Type II methyltransferase M.AplI (345 aa).

The 301-residue stretch at 25–325 (LVVLDLFAGC…KSVKMTLENK (301 aa)) folds into the SAM-dependent MTase C5-type domain. C93 is an active-site residue.

The protein belongs to the class I-like SAM-binding methyltransferase superfamily. C5-methyltransferase family.

It catalyses the reaction a 2'-deoxycytidine in DNA + S-adenosyl-L-methionine = a 5-methyl-2'-deoxycytidine in DNA + S-adenosyl-L-homocysteine + H(+). Its function is as follows. A methylase, recognizes the double-stranded sequence 5'-CTGCAG-3', methylates C-4 on both strands, and protects the DNA from cleavage by the AplI endonuclease. The protein is Type II methyltransferase M.AplI (aplIM) of Arthrospira platensis (strain NIES-39 / UTEX 3086 / IAM M-135) (Spirulina platensis).